Here is a 470-residue protein sequence, read N- to C-terminus: Hydroxymethylglutaryl-CoA synthase (470 aa).

The active-site Proton donor/acceptor is the Glu100. Catalysis depends on Cys134, which acts as the Acyl-thioester intermediate. 7 residues coordinate (3S)-3-hydroxy-3-methylglutaryl-CoA: Cys134, Thr176, Ser225, His269, Lys278, Asn348, and Ser382. The active-site Proton donor/acceptor is the His269.

It belongs to the thiolase-like superfamily. HMG-CoA synthase family.

It catalyses the reaction acetoacetyl-CoA + acetyl-CoA + H2O = (3S)-3-hydroxy-3-methylglutaryl-CoA + CoA + H(+). Its pathway is metabolic intermediate biosynthesis; (R)-mevalonate biosynthesis; (R)-mevalonate from acetyl-CoA: step 2/3. Hydroxymethylglutaryl-CoA synthase; part of the first module of ergosterol biosynthesis pathway that includes the early steps of the pathway, conserved across all eukaryotes, and which results in the formation of mevalonate from acetyl-coenzyme A (acetyl-CoA). This module also plays a key role in the biosynthesis of triterpenes such as ganoderic acids (GA), a group of highly oxygenated lanostane-type triterpenoids which are well recognized as a main group of unique bioactive compounds in the medicinal mushroom Ganoderma lucidum. In this module, the acetyl-CoA acetyltransferase catalyzes the formation of acetoacetyl-CoA. The hydroxymethylglutaryl-CoA synthase HMGS then condenses acetyl-CoA with acetoacetyl-CoA to form HMG-CoA. The rate-limiting step of the early module is the reduction to mevalonate by the 3-hydroxy-3-methylglutaryl-coenzyme A (HMG-CoA) reductase. This chain is Hydroxymethylglutaryl-CoA synthase, found in Ganoderma lucidum (Ling zhi medicinal fungus).